Reading from the N-terminus, the 874-residue chain is Alanine--tRNA ligase (874 aa).

His564, His568, Cys665, and His669 together coordinate Zn(2+).

This sequence belongs to the class-II aminoacyl-tRNA synthetase family. The cofactor is Zn(2+).

Its subcellular location is the cytoplasm. It carries out the reaction tRNA(Ala) + L-alanine + ATP = L-alanyl-tRNA(Ala) + AMP + diphosphate. In terms of biological role, catalyzes the attachment of alanine to tRNA(Ala) in a two-step reaction: alanine is first activated by ATP to form Ala-AMP and then transferred to the acceptor end of tRNA(Ala). Also edits incorrectly charged Ser-tRNA(Ala) and Gly-tRNA(Ala) via its editing domain. The chain is Alanine--tRNA ligase from Burkholderia lata (strain ATCC 17760 / DSM 23089 / LMG 22485 / NCIMB 9086 / R18194 / 383).